Here is a 255-residue protein sequence, read N- to C-terminus: Thiazole synthase (255 aa).

Lysine 96 serves as the catalytic Schiff-base intermediate with DXP. 1-deoxy-D-xylulose 5-phosphate-binding positions include glycine 157, 183–184 (AG), and 205–206 (NT).

The protein belongs to the ThiG family. As to quaternary structure, homotetramer. Forms heterodimers with either ThiH or ThiS.

It is found in the cytoplasm. The enzyme catalyses [ThiS sulfur-carrier protein]-C-terminal-Gly-aminoethanethioate + 2-iminoacetate + 1-deoxy-D-xylulose 5-phosphate = [ThiS sulfur-carrier protein]-C-terminal Gly-Gly + 2-[(2R,5Z)-2-carboxy-4-methylthiazol-5(2H)-ylidene]ethyl phosphate + 2 H2O + H(+). It functions in the pathway cofactor biosynthesis; thiamine diphosphate biosynthesis. In terms of biological role, catalyzes the rearrangement of 1-deoxy-D-xylulose 5-phosphate (DXP) to produce the thiazole phosphate moiety of thiamine. Sulfur is provided by the thiocarboxylate moiety of the carrier protein ThiS. In vitro, sulfur can be provided by H(2)S. This Staphylococcus epidermidis (strain ATCC 35984 / DSM 28319 / BCRC 17069 / CCUG 31568 / BM 3577 / RP62A) protein is Thiazole synthase.